Reading from the N-terminus, the 186-residue chain is TATA-box-binding protein D (186 aa).

A run of 2 repeats spans residues 10–86 and 101–179.

Belongs to the TBP family.

Its function is as follows. General factor that plays a role in the activation of archaeal genes transcribed by RNA polymerase. Binds specifically to the TATA box promoter element which lies close to the position of transcription initiation. The polypeptide is TATA-box-binding protein D (tbpD) (Halobacterium salinarum (strain ATCC 700922 / JCM 11081 / NRC-1) (Halobacterium halobium)).